The primary structure comprises 492 residues: Spindle assembly abnormal protein 6 (492 aa).

The PISA domain maps to 46 to 98 (SGEKELKFEISRSDDFEFLFSETLNNEKYQILARDHDLTVDFDAFPKVIIQHL). The stretch at 192 to 407 (KSADELASLR…KIAHYRAQRF (216 aa)) forms a coiled coil.

In terms of assembly, nine homodimers form a cartwheel structure with an internal diameter of 23 nM and radial spokes connecting to the microtubule triplets. Interacts with sas-5.

It localises to the cytoplasm. The protein localises to the cytoskeleton. The protein resides in the microtubule organizing center. It is found in the centrosome. Its subcellular location is the centriole. Functionally, central scaffolding component of the centrioles ensuring their 9-fold symmetry. Required for centrosome biogenesis and duplication. This is Spindle assembly abnormal protein 6 from Caenorhabditis elegans.